The sequence spans 290 residues: Small ribosomal subunit biogenesis GTPase RsgA (290 aa).

One can recognise a CP-type G domain in the interval 62–219 (DNYLIRPQVA…VVDTPGFSTL (158 aa)). Residues 111-114 (NKID) and 162-170 (GPSGVGKST) each bind GTP. Zn(2+)-binding residues include Cys243, Cys248, His250, and Cys256.

The protein belongs to the TRAFAC class YlqF/YawG GTPase family. RsgA subfamily. In terms of assembly, monomer. Associates with 30S ribosomal subunit, binds 16S rRNA. Zn(2+) serves as cofactor.

The protein localises to the cytoplasm. One of several proteins that assist in the late maturation steps of the functional core of the 30S ribosomal subunit. Helps release RbfA from mature subunits. May play a role in the assembly of ribosomal proteins into the subunit. Circularly permuted GTPase that catalyzes slow GTP hydrolysis, GTPase activity is stimulated by the 30S ribosomal subunit. This is Small ribosomal subunit biogenesis GTPase RsgA from Clostridium novyi (strain NT).